The sequence spans 162 residues: Endoribonuclease YbeY (162 aa).

Positions 117, 121, and 127 each coordinate Zn(2+).

It belongs to the endoribonuclease YbeY family. Zn(2+) is required as a cofactor.

It is found in the cytoplasm. In terms of biological role, single strand-specific metallo-endoribonuclease involved in late-stage 70S ribosome quality control and in maturation of the 3' terminus of the 16S rRNA. This chain is Endoribonuclease YbeY, found in Francisella tularensis subsp. holarctica (strain OSU18).